The sequence spans 423 residues: Gamma-glutamyl phosphate reductase 2 (423 aa).

It belongs to the gamma-glutamyl phosphate reductase family.

The protein resides in the cytoplasm. It carries out the reaction L-glutamate 5-semialdehyde + phosphate + NADP(+) = L-glutamyl 5-phosphate + NADPH + H(+). The protein operates within amino-acid biosynthesis; L-proline biosynthesis; L-glutamate 5-semialdehyde from L-glutamate: step 2/2. In terms of biological role, catalyzes the NADPH-dependent reduction of L-glutamate 5-phosphate into L-glutamate 5-semialdehyde and phosphate. The product spontaneously undergoes cyclization to form 1-pyrroline-5-carboxylate. This is Gamma-glutamyl phosphate reductase 2 from Bacillus licheniformis (strain ATCC 14580 / DSM 13 / JCM 2505 / CCUG 7422 / NBRC 12200 / NCIMB 9375 / NCTC 10341 / NRRL NRS-1264 / Gibson 46).